A 206-amino-acid polypeptide reads, in one-letter code: Imidazole glycerol phosphate synthase subunit HisH (206 aa).

Residues 1 to 206 (MIVIIDYGMG…LRILKNFGDM (206 aa)) enclose the Glutamine amidotransferase type-1 domain. The active-site Nucleophile is cysteine 79. Residues histidine 188 and glutamate 190 contribute to the active site.

In terms of assembly, heterodimer of HisH and HisF.

The protein resides in the cytoplasm. The catalysed reaction is 5-[(5-phospho-1-deoxy-D-ribulos-1-ylimino)methylamino]-1-(5-phospho-beta-D-ribosyl)imidazole-4-carboxamide + L-glutamine = D-erythro-1-(imidazol-4-yl)glycerol 3-phosphate + 5-amino-1-(5-phospho-beta-D-ribosyl)imidazole-4-carboxamide + L-glutamate + H(+). It carries out the reaction L-glutamine + H2O = L-glutamate + NH4(+). Its pathway is amino-acid biosynthesis; L-histidine biosynthesis; L-histidine from 5-phospho-alpha-D-ribose 1-diphosphate: step 5/9. In terms of biological role, IGPS catalyzes the conversion of PRFAR and glutamine to IGP, AICAR and glutamate. The HisH subunit catalyzes the hydrolysis of glutamine to glutamate and ammonia as part of the synthesis of IGP and AICAR. The resulting ammonia molecule is channeled to the active site of HisF. The sequence is that of Imidazole glycerol phosphate synthase subunit HisH from Syntrophotalea carbinolica (strain DSM 2380 / NBRC 103641 / GraBd1) (Pelobacter carbinolicus).